The primary structure comprises 77 residues: Conotoxin King-Kong 2 (77 aa).

The first 22 residues, 1–22 (MKLTCMMIVAVLFLTAWTFVTA), serve as a signal peptide directing secretion. Positions 23 to 49 (DDSGNGLENLFSKAHHEMKNPEASNLN) are excised as a propeptide. 3 disulfide bridges follow: cysteine 52/cysteine 67, cysteine 59/cysteine 71, and cysteine 66/cysteine 76. Cysteine 76 bears the Cysteine amide mark.

This sequence belongs to the conotoxin O1 superfamily. In terms of tissue distribution, expressed by the venom duct.

The protein localises to the secreted. The chain is Conotoxin King-Kong 2 from Conus textile (Cloth-of-gold cone).